Reading from the N-terminus, the 379-residue chain is Deoxyhypusine synthase (379 aa).

Residues 108-112 (SNLIS), 134-136 (TAG), E140, and D257 each bind NAD(+). 139–140 (EE) contacts spermidine. Residue D262 coordinates spermidine. NAD(+) is bound at residue G304. H309 provides a ligand contact to spermidine. Residue 329–330 (TG) participates in NAD(+) binding. Residues 335-337 (GSD) and 344-350 (EAVSWGK) contribute to the spermidine site. The active-site Nucleophile is K350. 363-364 (DA) contacts NAD(+).

The protein belongs to the deoxyhypusine synthase family. NAD(+) is required as a cofactor.

It carries out the reaction [eIF5A protein]-L-lysine + spermidine = [eIF5A protein]-deoxyhypusine + propane-1,3-diamine. It participates in protein modification; eIF5A hypusination. In terms of biological role, catalyzes the NAD-dependent oxidative cleavage of spermidine and the subsequent transfer of the butylamine moiety of spermidine to the epsilon-amino group of a specific lysine residue of the eIF-5A precursor protein to form the intermediate deoxyhypusine residue. The polypeptide is Deoxyhypusine synthase (DYS1) (Kluyveromyces lactis (strain ATCC 8585 / CBS 2359 / DSM 70799 / NBRC 1267 / NRRL Y-1140 / WM37) (Yeast)).